The chain runs to 395 residues: Carbohydrate sulfotransferase 6 (395 aa).

Over 1–5 the chain is Cytoplasmic; sequence MWLPR. A helical; Signal-anchor for type II membrane protein transmembrane segment spans residues 6–26; that stretch reads VSSTAVTALLLAQTFLLLFLV. Residues 27–395 lie on the Lumenal side of the membrane; the sequence is SRPGPSSPAG…ASSTASHPRN (369 aa). Position 49 to 55 (49 to 55) interacts with 3'-phosphoadenylyl sulfate; the sequence is WRSGSSF. Asn-116 is a glycosylation site (N-linked (GlcNAc...) asparagine). 202 to 210 contacts 3'-phosphoadenylyl sulfate; the sequence is RDPRAVLRS. Residues Asn-229, Asn-305, and Asn-328 are each glycosylated (N-linked (GlcNAc...) asparagine).

The protein belongs to the sulfotransferase 1 family. Gal/GlcNAc/GalNAc subfamily. As to expression, expressed in cornea. Mainly expressed in brain. Also expressed in spinal cord and trachea.

The protein localises to the golgi apparatus membrane. It catalyses the reaction 3'-phosphoadenylyl sulfate + keratan = adenosine 3',5'-bisphosphate + keratan 6'-sulfate.. Sulfotransferase that utilizes 3'-phospho-5'-adenylyl sulfate (PAPS) as sulfonate donor to catalyze the transfer of sulfate to position 6 of non-reducing N-acetylglucosamine (GlcNAc) residues of keratan. Cooperates with B4GALT4 galactosyltransferase and B3GNT7 N-acetylglucosaminyltransferase to construct and elongate the sulfated disaccharide unit [-&gt;3Galbeta1-&gt;4(6-sulfoGlcNAcbeta)1-&gt;] within keratan sulfate polymer. Involved in biosynthesis of keratan sulfate in cornea, with an impact on proteoglycan fibril organization and corneal transparency. Involved in sulfation of endothelial mucins such as GLYCAM1. The sequence is that of Carbohydrate sulfotransferase 6 from Homo sapiens (Human).